The chain runs to 102 residues: Small ribosomal subunit protein uS10 (102 aa).

The protein belongs to the universal ribosomal protein uS10 family. In terms of assembly, part of the 30S ribosomal subunit.

Its function is as follows. Involved in the binding of tRNA to the ribosomes. In Pelobacter propionicus (strain DSM 2379 / NBRC 103807 / OttBd1), this protein is Small ribosomal subunit protein uS10.